The primary structure comprises 62 residues: Chromatin protein Cren7 2 (62 aa).

It belongs to the Cren7 family. As to quaternary structure, monomer. Methylated at multiple sites, to varying extents.

The protein resides in the chromosome. It localises to the cytoplasm. A chromatin protein, binds double-stranded DNA without sequence specificity. Constrains negative DNA supercoils. This Hyperthermus butylicus (strain DSM 5456 / JCM 9403 / PLM1-5) protein is Chromatin protein Cren7 2 (cren7-2).